The sequence spans 865 residues: High affinity cAMP-specific and IBMX-insensitive 3',5'-cyclic phosphodiesterase 8B (865 aa).

Disordered stretches follow at residues 17 to 40 (CRDS…TAPL) and 52 to 92 (AMPP…TCRG). Over residues 23–36 (SNSPRQTSSVSQGP) the composition is skewed to polar residues. A compositionally biased stretch (low complexity) spans 75-90 (GSGSSTGSSGPATTTC). Residues 247-318 (ACNSVFTALD…DTINTCIKKG (72 aa)) enclose the PAS domain. The segment at 373–415 (IHRDSGDNSQTEPHSFRHKSRRKESIDVKSISSRGSDAPSLQN) is disordered. Residues 402–415 (SISSRGSDAPSLQN) are compositionally biased toward polar residues. Serine 497 bears the Phosphoserine mark. One can recognise a PDEase domain in the interval 519–855 (TINDVPPSIA…KHWKTLDDLK (337 aa)). The active-site Proton donor is the histidine 595. A divalent metal cation contacts are provided by histidine 599, histidine 635, and aspartate 636. 2 positions are modified to phosphoserine: serine 731 and serine 734. Residue aspartate 761 participates in a divalent metal cation binding.

This sequence belongs to the cyclic nucleotide phosphodiesterase family. PDE8 subfamily. Requires a divalent metal cation as cofactor. As to expression, widely expressed.

The enzyme catalyses 3',5'-cyclic AMP + H2O = AMP + H(+). The protein operates within purine metabolism; 3',5'-cyclic AMP degradation; AMP from 3',5'-cyclic AMP: step 1/1. Hydrolyzes the second messenger cAMP, which is a key regulator of many important physiological processes. May be involved in specific signaling in the thyroid gland. In Mus musculus (Mouse), this protein is High affinity cAMP-specific and IBMX-insensitive 3',5'-cyclic phosphodiesterase 8B (Pde8b).